Reading from the N-terminus, the 180-residue chain is Large ribosomal subunit protein uL5 (180 aa).

It belongs to the universal ribosomal protein uL5 family. In terms of assembly, part of the 50S ribosomal subunit; part of the 5S rRNA/L5/L18/L25 subcomplex. Contacts the 5S rRNA and the P site tRNA. Forms a bridge to the 30S subunit in the 70S ribosome.

In terms of biological role, this is one of the proteins that bind and probably mediate the attachment of the 5S RNA into the large ribosomal subunit, where it forms part of the central protuberance. In the 70S ribosome it contacts protein S13 of the 30S subunit (bridge B1b), connecting the 2 subunits; this bridge is implicated in subunit movement. Contacts the P site tRNA; the 5S rRNA and some of its associated proteins might help stabilize positioning of ribosome-bound tRNAs. The protein is Large ribosomal subunit protein uL5 of Chlamydia trachomatis serovar A (strain ATCC VR-571B / DSM 19440 / HAR-13).